Reading from the N-terminus, the 363-residue chain is MYYVGIMSGTSLDGIDAVLVDFSGPSFSLLHTCYIPYDQSLRAALLGLNQAGENELHRAAILSNQLSGWYAQAVGRLLEKSGIDPGEIIAVGCHGQTIRHCPQPENGYSIQLVNGALLAELTGMTVVTDFRSRDIAAGGQGAPLVPAFHHEMFAHRDIHRLIINIGGITNITSLPVSGGVNGFDCGPGNMLMDAWCLKHTGMTYDHNGSWAESGRVINPLLENLLNFPYFSLPPPKSTGREMFSLDWLQPCLRGDEATQDVQSTLLQLTVRTITDSVETYYPAVRELYLCGGGAHNGTLVTRLQQQLPGRRINLTDALGIEADWVEACAFAWLARQSIERAPGNLPAVTGATGSRTLGAIYPA.

Position 9-16 (9-16 (GTSLDGID)) interacts with ATP.

It belongs to the anhydro-N-acetylmuramic acid kinase family.

It catalyses the reaction 1,6-anhydro-N-acetyl-beta-muramate + ATP + H2O = N-acetyl-D-muramate 6-phosphate + ADP + H(+). It functions in the pathway amino-sugar metabolism; 1,6-anhydro-N-acetylmuramate degradation. Its pathway is cell wall biogenesis; peptidoglycan recycling. In terms of biological role, catalyzes the specific phosphorylation of 1,6-anhydro-N-acetylmuramic acid (anhMurNAc) with the simultaneous cleavage of the 1,6-anhydro ring, generating MurNAc-6-P. Is required for the utilization of anhMurNAc either imported from the medium or derived from its own cell wall murein, and thus plays a role in cell wall recycling. The sequence is that of Anhydro-N-acetylmuramic acid kinase from Nitrosomonas europaea (strain ATCC 19718 / CIP 103999 / KCTC 2705 / NBRC 14298).